Reading from the N-terminus, the 181-residue chain is Large ribosomal subunit protein uL5 (181 aa).

Belongs to the universal ribosomal protein uL5 family. In terms of assembly, part of the 50S ribosomal subunit; contacts the 5S rRNA and probably tRNA. Forms a bridge to the 30S subunit in the 70S ribosome.

This is one of the proteins that bind and probably mediate the attachment of the 5S RNA into the large ribosomal subunit, where it forms part of the central protuberance. In the 70S ribosome it contacts protein S13 of the 30S subunit (bridge B1b), connecting the 2 subunits; this bridge is implicated in subunit movement. May contact the P site tRNA; the 5S rRNA and some of its associated proteins might help stabilize positioning of ribosome-bound tRNAs. This chain is Large ribosomal subunit protein uL5, found in Methanococcus vannielii.